A 349-amino-acid chain; its full sequence is KH domain-containing, RNA-binding, signal transduction-associated protein 2 (349 aa).

Positions 65–135 (LIPVKQYPKF…HLSDELHVLI (71 aa)) constitute a KH domain. Disordered stretches follow at residues 182 to 284 (EDSG…DDQT) and 319 to 349 (PEEW…YGRY). Arg-230 and Arg-240 each carry omega-N-methylarginine. Positions 340-349 (GYREHPYGRY) are enriched in basic and acidic residues.

Belongs to the KHDRBS family. As to quaternary structure, self-associates to form homooligomers. Interacts with KHDRBS1/SAM68; heterooligomer formation of KHDRBS family proteins may modulate RNA substrate specificity. Interacts with RBMX. Interacts with SAFB, SFRS9 and YTHDC1. Interacts with FYN and PLCG1 (via SH3 domain). Interacts (phosphorylated) with FYN, GRB2, PLCG1 and RASA1 (via SH2 domain). In terms of processing, methylated. Tyrosine phosphorylated by FYN, PTK6 and SRC. Tyrosine phosphorylated by SRC during mitosis. As to expression, highly expressed in brain, lung, kidney and small intestine. Weakly expressed in placenta, liver, spleen, thymus, ovary and colon.

It localises to the nucleus. Functionally, RNA-binding protein that plays a role in the regulation of alternative splicing and influences mRNA splice site selection and exon inclusion. Binds both poly(A) and poly(U) homopolymers. Phosphorylation by PTK6 inhibits its RNA-binding ability. Induces an increased concentration-dependent incorporation of exon in CD44 pre-mRNA by direct binding to purine-rich exonic enhancer. Can regulate alternative splicing of NRXN1 in the laminin G-like domain 6 containing the evolutionary conserved neurexin alternative spliced segment 4 (AS4) involved in neurexin selective targeting to postsynaptic partners. Regulates cell-type specific alternative splicing of NRXN1 at AS4 and acts synergystically with SAM68 in exon skipping. In contrast acts antagonistically with SAM68 in NRXN3 exon skipping at AS4. Its phosphorylation by FYN inhibits its ability to regulate splice site selection. May function as an adapter protein for Src kinases during mitosis. This Homo sapiens (Human) protein is KH domain-containing, RNA-binding, signal transduction-associated protein 2 (KHDRBS2).